A 65-amino-acid polypeptide reads, in one-letter code: Large ribosomal subunit protein bL28 (65 aa).

Positions 1 to 26 are disordered; it reads MARRDDLTNKGPMSGNKRSHALNATK. Residues 17–26 are compositionally biased toward basic residues; it reads KRSHALNATK.

It belongs to the bacterial ribosomal protein bL28 family.

This Mycoplasma mobile (strain ATCC 43663 / 163K / NCTC 11711) (Mesomycoplasma mobile) protein is Large ribosomal subunit protein bL28.